Reading from the N-terminus, the 278-residue chain is UPF0276 protein Sama_1305 (278 aa).

It belongs to the UPF0276 family.

The sequence is that of UPF0276 protein Sama_1305 from Shewanella amazonensis (strain ATCC BAA-1098 / SB2B).